Here is an 80-residue protein sequence, read N- to C-terminus: Beta-toxin KAaH1 (80 aa).

The first 22 residues, 1–22 (MMKLMLFSIIVILFSLIGSIHG), serve as a signal peptide directing secretion. The LCN-type CS-alpha/beta domain maps to 25 to 80 (VPGNYPLDSSDDTYLCAPLGENPFCIKICRKHGVKYGYCYAFQCWCEYLEDKNVKI). Cystine bridges form between Cys40–Cys63, Cys49–Cys68, and Cys53–Cys70.

This sequence belongs to the long (3 C-C) scorpion toxin superfamily. Sodium/Potassium channel inhibitor family. As to expression, expressed by the venom gland.

Its subcellular location is the secreted. Its function is as follows. Inhibits the vertebrate potassium channels Kv1.1/KCNA1 and Kv1.3/KCNA3 in vitro with an IC(50) of 5.3 nM and 50.0 nM respectively. The chain is Beta-toxin KAaH1 from Androctonus australis (Sahara scorpion).